Consider the following 190-residue polypeptide: Acireductone dioxygenase (190 aa).

Residues histidine 101, histidine 103, glutamate 107, and histidine 145 each coordinate Fe(2+). Residues histidine 101, histidine 103, glutamate 107, and histidine 145 each coordinate Ni(2+).

Belongs to the acireductone dioxygenase (ARD) family. As to quaternary structure, monomer. Requires Fe(2+) as cofactor. Ni(2+) is required as a cofactor.

The catalysed reaction is 1,2-dihydroxy-5-(methylsulfanyl)pent-1-en-3-one + O2 = 3-(methylsulfanyl)propanoate + CO + formate + 2 H(+). The enzyme catalyses 1,2-dihydroxy-5-(methylsulfanyl)pent-1-en-3-one + O2 = 4-methylsulfanyl-2-oxobutanoate + formate + 2 H(+). The protein operates within amino-acid biosynthesis; L-methionine biosynthesis via salvage pathway; L-methionine from S-methyl-5-thio-alpha-D-ribose 1-phosphate: step 5/6. Functionally, catalyzes 2 different reactions between oxygen and the acireductone 1,2-dihydroxy-3-keto-5-methylthiopentene (DHK-MTPene) depending upon the metal bound in the active site. Fe-containing acireductone dioxygenase (Fe-ARD) produces formate and 2-keto-4-methylthiobutyrate (KMTB), the alpha-ketoacid precursor of methionine in the methionine recycle pathway. Ni-containing acireductone dioxygenase (Ni-ARD) produces methylthiopropionate, carbon monoxide and formate, and does not lie on the methionine recycle pathway. This is Acireductone dioxygenase from Saccharopolyspora erythraea (strain ATCC 11635 / DSM 40517 / JCM 4748 / NBRC 13426 / NCIMB 8594 / NRRL 2338).